The primary structure comprises 125 residues: Small ribosomal subunit protein uS12 (125 aa).

The residue at position 89 (D89) is a 3-methylthioaspartic acid. Residues 100-125 (GSLDTQGVKDRKQSRSKYGAKRPKAA) form a disordered region. Residues 113–125 (SRSKYGAKRPKAA) show a composition bias toward basic residues.

Belongs to the universal ribosomal protein uS12 family. In terms of assembly, part of the 30S ribosomal subunit. Contacts proteins S8 and S17. May interact with IF1 in the 30S initiation complex.

With S4 and S5 plays an important role in translational accuracy. In terms of biological role, interacts with and stabilizes bases of the 16S rRNA that are involved in tRNA selection in the A site and with the mRNA backbone. Located at the interface of the 30S and 50S subunits, it traverses the body of the 30S subunit contacting proteins on the other side and probably holding the rRNA structure together. The combined cluster of proteins S8, S12 and S17 appears to hold together the shoulder and platform of the 30S subunit. This chain is Small ribosomal subunit protein uS12, found in Dechloromonas aromatica (strain RCB).